Consider the following 497-residue polypeptide: Kynureninase (497 aa).

The interval 59 to 86 (GRLPAYPPNHAKPGETATAQNGTSNTND) is disordered. A compositionally biased stretch (polar residues) spans 75–86 (ATAQNGTSNTND). Pyridoxal 5'-phosphate is bound by residues Leu-166, Thr-167, 194-197 (FPSD), Asp-278, His-281, and Tyr-303. An N6-(pyridoxal phosphate)lysine modification is found at Lys-304. Pyridoxal 5'-phosphate-binding residues include Trp-337 and Asn-365.

It belongs to the kynureninase family. As to quaternary structure, homodimer. It depends on pyridoxal 5'-phosphate as a cofactor.

The protein localises to the cytoplasm. It carries out the reaction L-kynurenine + H2O = anthranilate + L-alanine + H(+). The enzyme catalyses 3-hydroxy-L-kynurenine + H2O = 3-hydroxyanthranilate + L-alanine + H(+). It participates in amino-acid degradation; L-kynurenine degradation; L-alanine and anthranilate from L-kynurenine: step 1/1. Its pathway is cofactor biosynthesis; NAD(+) biosynthesis; quinolinate from L-kynurenine: step 2/3. Its function is as follows. Catalyzes the cleavage of L-kynurenine (L-Kyn) and L-3-hydroxykynurenine (L-3OHKyn) into anthranilic acid (AA) and 3-hydroxyanthranilic acid (3-OHAA), respectively. This Pyricularia oryzae (strain 70-15 / ATCC MYA-4617 / FGSC 8958) (Rice blast fungus) protein is Kynureninase.